Reading from the N-terminus, the 456-residue chain is Phosphomethylpyrimidine synthase (456 aa).

Residues Asn-80, Met-109, Tyr-139, His-175, 195–197 (SRG), 236–239 (DSLR), and Glu-275 each bind substrate. His-279 contacts Zn(2+). Position 302 (Tyr-302) interacts with substrate. Position 343 (His-343) interacts with Zn(2+). The [4Fe-4S] cluster site is built by Cys-423, Cys-426, and Cys-431.

The protein belongs to the ThiC family. It depends on [4Fe-4S] cluster as a cofactor.

It carries out the reaction 5-amino-1-(5-phospho-beta-D-ribosyl)imidazole + S-adenosyl-L-methionine = 4-amino-2-methyl-5-(phosphooxymethyl)pyrimidine + CO + 5'-deoxyadenosine + formate + L-methionine + 3 H(+). Its pathway is cofactor biosynthesis; thiamine diphosphate biosynthesis. Its function is as follows. Catalyzes the synthesis of the hydroxymethylpyrimidine phosphate (HMP-P) moiety of thiamine from aminoimidazole ribotide (AIR) in a radical S-adenosyl-L-methionine (SAM)-dependent reaction. The polypeptide is Phosphomethylpyrimidine synthase (Prochlorococcus marinus (strain AS9601)).